The sequence spans 302 residues: UPF0761 membrane protein Tola_0461 (302 aa).

Transmembrane regions (helical) follow at residues 51–71 (YVSL…LSWL), 111–131 (TTSI…AAID), 150–170 (ITMY…SLLL), 188–208 (LGGG…ILLL), 222–242 (ALLG…GFGY), and 256–276 (ALAG…VVLL).

Belongs to the UPF0761 family.

The protein localises to the cell inner membrane. The chain is UPF0761 membrane protein Tola_0461 from Tolumonas auensis (strain DSM 9187 / NBRC 110442 / TA 4).